Reading from the N-terminus, the 154-residue chain is GTP-dependent dephospho-CoA kinase (154 aa).

Positions 34, 53, and 107 each coordinate GTP.

The protein belongs to the GTP-dependent DPCK family.

The enzyme catalyses 3'-dephospho-CoA + GTP = GDP + CoA + H(+). Its pathway is cofactor biosynthesis; coenzyme A biosynthesis. In terms of biological role, catalyzes the GTP-dependent phosphorylation of the 3'-hydroxyl group of dephosphocoenzyme A to form coenzyme A (CoA). This is GTP-dependent dephospho-CoA kinase from Nitrosopumilus maritimus (strain SCM1).